The following is an 88-amino-acid chain: RQC P-site tRNA stabilizing factor (88 aa).

In terms of domain architecture, S4 RNA-binding spans 1–67 (MRLDKFLKVS…VEITNVKETV (67 aa)).

The protein belongs to the RqcP family. In terms of assembly, associates with stalled 50S ribosomal subunits. Binds to RqcH, 23S rRNA and the P-site tRNA. Does not require RqcH for association with 50S subunits.

Key component of the ribosome quality control system (RQC), a ribosome-associated complex that mediates the extraction of incompletely synthesized nascent chains from stalled ribosomes and their subsequent degradation. RqcH recruits Ala-charged tRNA, and with RqcP directs the elongation of stalled nascent chains on 50S ribosomal subunits, leading to non-templated C-terminal alanine extensions (Ala tail). The Ala tail promotes nascent chain degradation. RqcP is associated with the translocation-like movement of the peptidyl-tRNA from the A-site into the P-site. This chain is RQC P-site tRNA stabilizing factor, found in Halalkalibacterium halodurans (strain ATCC BAA-125 / DSM 18197 / FERM 7344 / JCM 9153 / C-125) (Bacillus halodurans).